The following is a 170-amino-acid chain: Peptide deformylase (170 aa).

Positions 94 and 136 each coordinate Fe cation. Glutamate 137 is a catalytic residue. Histidine 140 provides a ligand contact to Fe cation.

It belongs to the polypeptide deformylase family. Requires Fe(2+) as cofactor.

It carries out the reaction N-terminal N-formyl-L-methionyl-[peptide] + H2O = N-terminal L-methionyl-[peptide] + formate. Its function is as follows. Removes the formyl group from the N-terminal Met of newly synthesized proteins. Requires at least a dipeptide for an efficient rate of reaction. N-terminal L-methionine is a prerequisite for activity but the enzyme has broad specificity at other positions. This is Peptide deformylase from Stenotrophomonas maltophilia (strain R551-3).